Here is a 394-residue protein sequence, read N- to C-terminus: Flap endonuclease 1 (394 aa).

The tract at residues 1 to 104 (MGIKQLFSVI…GELAKRFQRK (104 aa)) is N-domain. Position 34 (aspartate 34) interacts with Mg(2+). DNA contacts are provided by arginine 47 and arginine 70. Residues aspartate 86, glutamate 158, glutamate 160, aspartate 179, and aspartate 181 each coordinate Mg(2+). Residues 122-253 (DVEKFSRRTV…STALKLIREH (132 aa)) form an I-domain region. Glutamate 158 serves as a coordination point for DNA. The DNA site is built by glycine 231 and aspartate 233. Aspartate 233 contacts Mg(2+). Residues 341–349 (QQARIEGFF) form an interaction with PCNA region. The span at 356–383 (EEEKKAHKRKLEEQAEQKRKKVKEEKKE) shows a compositional bias: basic and acidic residues. The disordered stretch occupies residues 356–394 (EEEKKAHKRKLEEQAEQKRKKVKEEKKEKAKLKAKPRGA). Residues 384 to 394 (KAKLKAKPRGA) are compositionally biased toward basic residues.

This sequence belongs to the XPG/RAD2 endonuclease family. FEN1 subfamily. In terms of assembly, interacts with PCNA. Three molecules of dnr-8/fen1 bind to one PCNA trimer with each molecule binding to one PCNA monomer. PCNA stimulates the nuclease activity without altering cleavage specificity. It depends on Mg(2+) as a cofactor. Phosphorylated. Phosphorylation upon DNA damage induces relocalization to the nuclear plasma.

Its subcellular location is the nucleus. The protein localises to the nucleolus. The protein resides in the nucleoplasm. It localises to the mitochondrion. Functionally, structure-specific nuclease with 5'-flap endonuclease and 5'-3' exonuclease activities involved in DNA replication and repair. During DNA replication, cleaves the 5'-overhanging flap structure that is generated by displacement synthesis when DNA polymerase encounters the 5'-end of a downstream Okazaki fragment. It enters the flap from the 5'-end and then tracks to cleave the flap base, leaving a nick for ligation. Also involved in the long patch base excision repair (LP-BER) pathway, by cleaving within the apurinic/apyrimidinic (AP) site-terminated flap. Acts as a genome stabilization factor that prevents flaps from equilibrating into structures that lead to duplications and deletions. Also possesses 5'-3' exonuclease activity on nicked or gapped double-stranded DNA, and exhibits RNase H activity. Also involved in replication and repair of rDNA and in repairing mitochondrial DNA. This Neurospora crassa (strain ATCC 24698 / 74-OR23-1A / CBS 708.71 / DSM 1257 / FGSC 987) protein is Flap endonuclease 1 (dnr-8).